The chain runs to 1297 residues: Outer capsid protein VP1 (1297 aa).

The protein belongs to the aquareoviridae outer capsid VP1 protein family.

Its subcellular location is the virion. It carries out the reaction a 5'-end diphospho-ribonucleoside in mRNA + GTP + H(+) = a 5'-end (5'-triphosphoguanosine)-ribonucleoside in mRNA + diphosphate. The catalysed reaction is a 5'-end (5'-triphosphoguanosine)-ribonucleoside in mRNA + S-adenosyl-L-methionine = a 5'-end (N(7)-methyl 5'-triphosphoguanosine)-ribonucleoside in mRNA + S-adenosyl-L-homocysteine. Its function is as follows. Outer capsid protein involved in mRNA capping. Catalyzes the last 3 enzymatic activities for formation of the 5' cap structure on the viral plus-strand transcripts, namely the RNA guanylyltransferase, RNA-7N- and RNA-2'O-methyltransferase activities. In Oncorhynchus keta (Chum salmon), this protein is Outer capsid protein VP1 (S1).